Here is a 422-residue protein sequence, read N- to C-terminus: Bifunctional enzyme IspD/IspF (422 aa).

Residues 1 to 267 (MAVGLLLLAA…PISALSMPLP (267 aa)) are 2-C-methyl-D-erythritol 4-phosphate cytidylyltransferase. Residues 268–422 (LIGVGIDFHK…AIAVAQIYHR (155 aa)) are 2-C-methyl-D-erythritol 2,4-cyclodiphosphate synthase. A divalent metal cation contacts are provided by Asp274 and His276. 4-CDP-2-C-methyl-D-erythritol 2-phosphate-binding positions include 274–276 (DFH) and 301–302 (HS). An a divalent metal cation-binding site is contributed by His309. 4-CDP-2-C-methyl-D-erythritol 2-phosphate contacts are provided by residues 323-325 (DIG), Phe404, and Arg407.

In the N-terminal section; belongs to the IspD/TarI cytidylyltransferase family. IspD subfamily. The protein in the C-terminal section; belongs to the IspF family. The cofactor is a divalent metal cation.

It carries out the reaction 2-C-methyl-D-erythritol 4-phosphate + CTP + H(+) = 4-CDP-2-C-methyl-D-erythritol + diphosphate. The catalysed reaction is 4-CDP-2-C-methyl-D-erythritol 2-phosphate = 2-C-methyl-D-erythritol 2,4-cyclic diphosphate + CMP. It functions in the pathway isoprenoid biosynthesis; isopentenyl diphosphate biosynthesis via DXP pathway; isopentenyl diphosphate from 1-deoxy-D-xylulose 5-phosphate: step 2/6. The protein operates within isoprenoid biosynthesis; isopentenyl diphosphate biosynthesis via DXP pathway; isopentenyl diphosphate from 1-deoxy-D-xylulose 5-phosphate: step 4/6. Functionally, bifunctional enzyme that catalyzes the formation of 4-diphosphocytidyl-2-C-methyl-D-erythritol from CTP and 2-C-methyl-D-erythritol 4-phosphate (MEP) (IspD), and catalyzes the conversion of 4-diphosphocytidyl-2-C-methyl-D-erythritol 2-phosphate (CDP-ME2P) to 2-C-methyl-D-erythritol 2,4-cyclodiphosphate (ME-CPP) with a corresponding release of cytidine 5-monophosphate (CMP) (IspF). In Tropheryma whipplei (strain TW08/27) (Whipple's bacillus), this protein is Bifunctional enzyme IspD/IspF.